Reading from the N-terminus, the 244-residue chain is Triosephosphate isomerase (244 aa).

8-10 (NWK) serves as a coordination point for substrate. The active-site Electrophile is histidine 93. The active-site Proton acceptor is the glutamate 161. Substrate-binding positions include glycine 167, serine 206, and 227–228 (GG).

It belongs to the triosephosphate isomerase family. As to quaternary structure, homodimer.

It localises to the cytoplasm. The catalysed reaction is D-glyceraldehyde 3-phosphate = dihydroxyacetone phosphate. It functions in the pathway carbohydrate biosynthesis; gluconeogenesis. It participates in carbohydrate degradation; glycolysis; D-glyceraldehyde 3-phosphate from glycerone phosphate: step 1/1. Functionally, involved in the gluconeogenesis. Catalyzes stereospecifically the conversion of dihydroxyacetone phosphate (DHAP) to D-glyceraldehyde-3-phosphate (G3P). This is Triosephosphate isomerase from Deinococcus radiodurans (strain ATCC 13939 / DSM 20539 / JCM 16871 / CCUG 27074 / LMG 4051 / NBRC 15346 / NCIMB 9279 / VKM B-1422 / R1).